The sequence spans 181 residues: 6,7-dimethyl-8-ribityllumazine synthase (181 aa).

Residues tyrosine 30, 61–63, and 87–89 contribute to the 5-amino-6-(D-ribitylamino)uracil site; these read ALE and CII. 92–93 contacts (2S)-2-hydroxy-3-oxobutyl phosphate; sequence ET. The Proton donor role is filled by histidine 95. Asparagine 120 is a 5-amino-6-(D-ribitylamino)uracil binding site. A (2S)-2-hydroxy-3-oxobutyl phosphate-binding site is contributed by arginine 134.

This sequence belongs to the DMRL synthase family.

The enzyme catalyses (2S)-2-hydroxy-3-oxobutyl phosphate + 5-amino-6-(D-ribitylamino)uracil = 6,7-dimethyl-8-(1-D-ribityl)lumazine + phosphate + 2 H2O + H(+). It functions in the pathway cofactor biosynthesis; riboflavin biosynthesis; riboflavin from 2-hydroxy-3-oxobutyl phosphate and 5-amino-6-(D-ribitylamino)uracil: step 1/2. Catalyzes the formation of 6,7-dimethyl-8-ribityllumazine by condensation of 5-amino-6-(D-ribitylamino)uracil with 3,4-dihydroxy-2-butanone 4-phosphate. This is the penultimate step in the biosynthesis of riboflavin. In Beijerinckia indica subsp. indica (strain ATCC 9039 / DSM 1715 / NCIMB 8712), this protein is 6,7-dimethyl-8-ribityllumazine synthase.